Here is a 163-residue protein sequence, read N- to C-terminus: NADH-quinone oxidoreductase subunit I (163 aa).

4Fe-4S ferredoxin-type domains follow at residues 53–83 and 94–123; these read LRRY…IEAG and VRYD…EGPN. 8 residues coordinate [4Fe-4S] cluster: Cys-63, Cys-66, Cys-69, Cys-73, Cys-103, Cys-106, Cys-109, and Cys-113.

Belongs to the complex I 23 kDa subunit family. As to quaternary structure, NDH-1 is composed of 14 different subunits. Subunits NuoA, H, J, K, L, M, N constitute the membrane sector of the complex. It depends on [4Fe-4S] cluster as a cofactor.

It localises to the cell inner membrane. It catalyses the reaction a quinone + NADH + 5 H(+)(in) = a quinol + NAD(+) + 4 H(+)(out). In terms of biological role, NDH-1 shuttles electrons from NADH, via FMN and iron-sulfur (Fe-S) centers, to quinones in the respiratory chain. The immediate electron acceptor for the enzyme in this species is believed to be ubiquinone. Couples the redox reaction to proton translocation (for every two electrons transferred, four hydrogen ions are translocated across the cytoplasmic membrane), and thus conserves the redox energy in a proton gradient. This Bartonella tribocorum (strain CIP 105476 / IBS 506) protein is NADH-quinone oxidoreductase subunit I.